Consider the following 577-residue polypeptide: Arginine--tRNA ligase (577 aa).

The short motif at 122 to 132 is the 'HIGH' region element; sequence PNVAKEMHVGH.

The protein belongs to the class-I aminoacyl-tRNA synthetase family. As to quaternary structure, monomer.

The protein resides in the cytoplasm. The enzyme catalyses tRNA(Arg) + L-arginine + ATP = L-arginyl-tRNA(Arg) + AMP + diphosphate. The protein is Arginine--tRNA ligase of Escherichia coli O8 (strain IAI1).